A 317-amino-acid chain; its full sequence is Epidermal growth factor-like protein (317 aa).

Positions 1–23 (MDFKIFLFLTAIFMIVGVTVSTA) are cleaved as a signal peptide. The segment at 24 to 33 (TTNPTAPRAY) is may be required for E.coli agglutination activity. EGF-like domains are found at residues 93–128 (HCTP…GKCI), 130–161 (VCPG…RYCT), 163–195 (GCTR…GTCQ), 208–243 (ACEP…KVCA), 245–280 (KCSQ…NRCI), and 282–315 (YCAA…NVCV). Cystine bridges form between Cys98-Cys107, Cys102-Cys113, Cys115-Cys127, Cys131-Cys140, Cys135-Cys145, Cys147-Cys160, Cys164-Cys174, Cys168-Cys180, Cys182-Cys194, Cys213-Cys222, Cys217-Cys228, Cys230-Cys242, Cys246-Cys255, Cys250-Cys261, Cys263-Cys279, Cys283-Cys292, Cys287-Cys298, and Cys300-Cys314.

Its subcellular location is the secreted. Its function is as follows. Binds to lipopolysaccharides (LPS) present on the cell walls of Gram-negative bacteria, behaving as a pattern recognition receptor (PRR). Induces bacterial aggregation and enhances their subsequent clearance by the innate immune response. Binds to the inner core oligosaccharides region of rough-type bacterial LPS. Displays activity against the Gram-negative bacterium E.coli. Does not display any activity against the Gram-positive bacterium S.aureus or the fungi C.albicans. This Holotrichia diomphalia (Korean black chafer) protein is Epidermal growth factor-like protein.